Consider the following 147-residue polypeptide: MKTKICIITGSTLGGAEYVAEHIAEILEQQDYPVRLEHGPNFEEVIDEKCWLVVTSTHGAGELPDNIKPLFEKLAFHPKQLADLRFAVIGLGNSDYDTFCHAVDHVEQLLLSKDALQLCESLRMDMLTITDPEHTAEQWLPQFLSQL.

The region spanning 5-144 is the Flavodoxin-like domain; it reads ICIITGSTLG…TAEQWLPQFL (140 aa).

The protein belongs to the flavodoxin family. MioC subfamily. The cofactor is FMN.

Functionally, probable electron transporter required for biotin synthase activity. This chain is Protein MioC homolog (mioC), found in Pasteurella multocida (strain Pm70).